A 349-amino-acid polypeptide reads, in one-letter code: Protein RecA (349 aa).

65–72 (GPESSGKT) contacts ATP.

Belongs to the RecA family.

The protein resides in the cytoplasm. Its function is as follows. Can catalyze the hydrolysis of ATP in the presence of single-stranded DNA, the ATP-dependent uptake of single-stranded DNA by duplex DNA, and the ATP-dependent hybridization of homologous single-stranded DNAs. It interacts with LexA causing its activation and leading to its autocatalytic cleavage. The protein is Protein RecA of Vibrio vulnificus (strain CMCP6).